The primary structure comprises 510 residues: MEIWKVIFSIWFLLFQNFVLSAKNDDNKLKVIRGRNVIYNGNVIPLSILIRNGKTIGIKDYSFNPKKLNENYEILYDDRECNNNEDFIIMGGLVDSHVHVNEPGRTEWEGFESATSAAAAGGVTTIVDMPLNSSPVTTSFKNLLDKIESMKGKLRVDVGLLGGIVPGNSKEIKKMVLQGGVLGFKSFLLPSGIDEFPPVNENDIQEAMNEMKLLKCQYNNSDVIMMFHAEVEEPIKEATVRLKNENADPKLYKTYLDSRPKISENQAISKLIDITRQNQIVSTHIVHLSSSESIEQIREAMDQGVPISAETTYNYLHLTSESVPYGNTLFKSAPPVREHENKELLWNAIINGTIKLIVSDHSPCTINLKQLKEDNQSIGDFLKAWGGISSLELGLPIIWTECKNRGIPITQLSEWLSNGPSKLVGLNDRKGSIEIGRDADFVIFNPNESFIVNEKKLFLKNKFSAYNGEKLFGVVYETILRGNSIFKKGDNKIKKIIGQRLIKSNLINKK.

Residues His-97, His-99, Lys-185, His-228, His-287, and Asp-360 each coordinate Zn(2+). Residue Lys-185 is modified to N6-carboxylysine.

This sequence belongs to the metallo-dependent hydrolases superfamily. Allantoinase family. Homotetramer. Zn(2+) serves as cofactor. Post-translationally, carboxylation allows a single lysine to coordinate two zinc ions.

It catalyses the reaction (S)-allantoin + H2O = allantoate + H(+). Its pathway is nitrogen metabolism; (S)-allantoin degradation; allantoate from (S)-allantoin: step 1/1. The chain is Probable allantoinase 2 (allB2) from Dictyostelium discoideum (Social amoeba).